The sequence spans 146 residues: Hemoglobin subunit beta (146 aa).

Residues 2-146 (HWSAEEKQLI…VAHALARKYH (145 aa)) enclose the Globin domain. Residues histidine 63 and histidine 92 each contribute to the heme b site.

This sequence belongs to the globin family. As to quaternary structure, heterotetramer of two alpha chains and two beta chains. As to expression, red blood cells.

Involved in oxygen transport from the lung to the various peripheral tissues. The protein is Hemoglobin subunit beta (HBB) of Phoenicopterus ruber (American flamingo).